A 448-amino-acid polypeptide reads, in one-letter code: Exodeoxyribonuclease 7 large subunit (448 aa).

Belongs to the XseA family. In terms of assembly, heterooligomer composed of large and small subunits.

The protein resides in the cytoplasm. The catalysed reaction is Exonucleolytic cleavage in either 5'- to 3'- or 3'- to 5'-direction to yield nucleoside 5'-phosphates.. Functionally, bidirectionally degrades single-stranded DNA into large acid-insoluble oligonucleotides, which are then degraded further into small acid-soluble oligonucleotides. The polypeptide is Exodeoxyribonuclease 7 large subunit (Shewanella baltica (strain OS195)).